The following is a 477-amino-acid chain: UDP-N-acetylmuramate--L-alanine ligase (477 aa).

122–128 (GTHGKTT) serves as a coordination point for ATP.

This sequence belongs to the MurCDEF family.

The protein localises to the cytoplasm. It catalyses the reaction UDP-N-acetyl-alpha-D-muramate + L-alanine + ATP = UDP-N-acetyl-alpha-D-muramoyl-L-alanine + ADP + phosphate + H(+). It participates in cell wall biogenesis; peptidoglycan biosynthesis. Its function is as follows. Cell wall formation. The chain is UDP-N-acetylmuramate--L-alanine ligase from Xylella fastidiosa (strain M23).